The following is a 305-amino-acid chain: tRNA pseudouridine synthase B (305 aa).

D41 functions as the Nucleophile in the catalytic mechanism.

It belongs to the pseudouridine synthase TruB family. Type 1 subfamily.

The catalysed reaction is uridine(55) in tRNA = pseudouridine(55) in tRNA. Responsible for synthesis of pseudouridine from uracil-55 in the psi GC loop of transfer RNAs. In Prochlorococcus marinus (strain MIT 9301), this protein is tRNA pseudouridine synthase B.